The sequence spans 284 residues: Probable tRNA-splicing endonuclease subunit sen34 (284 aa).

Active-site residues include Tyr206, His214, and Lys245.

It belongs to the tRNA-intron endonuclease family. In terms of assembly, heterotetramer composed of sen2, sen15, sen34 and sen54. Interacts directly with sen15.

The catalysed reaction is pretRNA = a 3'-half-tRNA molecule with a 5'-OH end + a 5'-half-tRNA molecule with a 2',3'-cyclic phosphate end + an intron with a 2',3'-cyclic phosphate and a 5'-hydroxyl terminus.. In terms of biological role, constitutes one of the two catalytic subunit of the tRNA-splicing endonuclease complex, a complex responsible for identification and cleavage of the splice sites in pre-tRNA. It cleaves pre-tRNA at the 5'- and 3'-splice sites to release the intron. The products are an intron and two tRNA half-molecules bearing 2',3'-cyclic phosphate and 5'-OH termini. There are no conserved sequences at the splice sites, but the intron is invariably located at the same site in the gene, placing the splice sites an invariant distance from the constant structural features of the tRNA body. It probably carries the active site for 3'-splice site cleavage. In Schizosaccharomyces pombe (strain 972 / ATCC 24843) (Fission yeast), this protein is Probable tRNA-splicing endonuclease subunit sen34 (sen34).